Here is a 644-residue protein sequence, read N- to C-terminus: MNDNKNNTVRNLLIGIALLSGISLTAKKFDLIGVQGSESGKNINQVNPNVISSKMTYGRFLEYLEMGWVNQVDLYDNSRNAIVQASSPELGNRPQTIRVEIPVGASQLIQKLKEYNIDFDAHPAEQKNIFVNILSNILLPIIFITGLVYLFQNSENFGGGSGQSPMSLGKSTARFERRPDTGVSFKDIAGIDEAKTEFEEIVSFLKEPDKYTIVGAKIPKGILLVGPPGTGKTLLAKAIANEADVPFFSVAGSEFVEMFIGIGAARVRDLFKKASENAPCIVFIDEIDAVGRERGAGVGGGNDEREQTLNQLLTEMDGFKENKGVIVVGATNRADILDAALLRPGRFDRQVTVNLPDRLGRVGILKVHARNKPLGEDVSLVQLANRTPGFSGADLANLLNEAAILATRYKKSSITKNEVNEAADRIIGGIAGAPMEDTKNKRLIAYHEVGHAITGSVLKSHDEVEKITLTPRGGAKGLTWFTPEEDQSLLSRSALLARIITTLGGRAAEQVIFGEPEVTTGASSDLQQVTNLARQMVTRFGMSNIGPLALEDESTGQVFLGGNMASGSEYAENIADRIDDEVRKIITYCYEKAIEIVLDNRVVIDLIVEKLLDKETMDGDEFRELLSTYTILPNKNIPYVSKFN.

At M1–N11 the chain is on the stromal side. Residues L12–I32 form a helical membrane-spanning segment. The Lumenal portion of the chain corresponds to G33–N128. Residues I129–Y149 traverse the membrane as a helical segment. Residues L150 to N644 are Stromal-facing. G226 to T233 provides a ligand contact to ATP. H447 serves as a coordination point for Zn(2+). The active site involves E448. Zn(2+) is bound by residues H451 and D525.

It in the central section; belongs to the AAA ATPase family. In the C-terminal section; belongs to the peptidase M41 family. As to quaternary structure, homohexamer. Zn(2+) serves as cofactor.

It localises to the plastid. The protein localises to the chloroplast thylakoid membrane. Acts as a processive, ATP-dependent zinc metallopeptidase. The sequence is that of ATP-dependent zinc metalloprotease FtsH from Trieres chinensis (Marine centric diatom).